The sequence spans 323 residues: Serine racemase (323 aa).

Residues Ser32, Ser33, and Lys52 each contribute to the ATP site. Catalysis depends on Lys57, which acts as the Proton acceptor. Residue Lys57 is modified to Lysino-D-alanine (Lys); alternate. An N6-(pyridoxal phosphate)lysine; alternate modification is found at Lys57. Position 79 (Thr79) interacts with Ca(2+). Ser82 acts as the Proton acceptor in catalysis. Asn84 is a pyridoxal 5'-phosphate binding site. ATP is bound by residues Gln87 and Tyr119. A Mg(2+)-binding site is contributed by Asp176. Pyridoxal 5'-phosphate contacts are provided by Gly183, Gly184, Gly185, Gly186, and Leu187. The Ca(2+) site is built by Glu208, Gly212, and Asp214. The Mg(2+) site is built by Glu208, Gly212, and Asp214. 3 residues coordinate Mn(2+): Glu208, Gly212, and Asp214. Lys277 contacts ATP. Ser308 serves as a coordination point for pyridoxal 5'-phosphate. Residue Asn311 participates in ATP binding.

This sequence belongs to the serine/threonine dehydratase family. Homodimer. Mg(2+) serves as cofactor. Requires Mn(2+) as cofactor. It depends on Ca(2+) as a cofactor. Pyridoxal 5'-phosphate is required as a cofactor. In terms of processing, modification of the active site Lys by its substrate Ser to lysino-D-alanine reduces but does not abolish enzyme activity.

It catalyses the reaction L-serine = D-serine. It carries out the reaction L-serine = pyruvate + NH4(+). The enzyme catalyses D-serine = pyruvate + NH4(+). Its activity is regulated as follows. Allosterically activated by ATP, by magnesium, and possibly also by other divalent metal cations. Functionally, catalyzes the synthesis of D-serine from L-serine. Has dehydratase activity towards both L-serine and D-serine. The polypeptide is Serine racemase (Schizosaccharomyces pombe (strain 972 / ATCC 24843) (Fission yeast)).